Reading from the N-terminus, the 264-residue chain is S-adenosylmethionine decarboxylase proenzyme (264 aa).

Serine 113 (schiff-base intermediate with substrate; via pyruvic acid) is an active-site residue. Serine 113 carries the post-translational modification Pyruvic acid (Ser); by autocatalysis. Histidine 118 (proton acceptor; for processing activity) is an active-site residue. The active-site Proton donor; for catalytic activity is cysteine 141.

Belongs to the prokaryotic AdoMetDC family. Type 2 subfamily. Heterooctamer of four alpha and four beta chains arranged as a tetramer of alpha/beta heterodimers. Pyruvate is required as a cofactor. In terms of processing, is synthesized initially as an inactive proenzyme. Formation of the active enzyme involves a self-maturation process in which the active site pyruvoyl group is generated from an internal serine residue via an autocatalytic post-translational modification. Two non-identical subunits are generated from the proenzyme in this reaction, and the pyruvate is formed at the N-terminus of the alpha chain, which is derived from the carboxyl end of the proenzyme. The post-translation cleavage follows an unusual pathway, termed non-hydrolytic serinolysis, in which the side chain hydroxyl group of the serine supplies its oxygen atom to form the C-terminus of the beta chain, while the remainder of the serine residue undergoes an oxidative deamination to produce ammonia and the pyruvoyl group blocking the N-terminus of the alpha chain.

The enzyme catalyses S-adenosyl-L-methionine + H(+) = S-adenosyl 3-(methylsulfanyl)propylamine + CO2. The protein operates within amine and polyamine biosynthesis; S-adenosylmethioninamine biosynthesis; S-adenosylmethioninamine from S-adenosyl-L-methionine: step 1/1. Its function is as follows. Catalyzes the decarboxylation of S-adenosylmethionine to S-adenosylmethioninamine (dcAdoMet), the propylamine donor required for the synthesis of the polyamines spermine and spermidine from the diamine putrescine. This Pseudomonas aeruginosa (strain ATCC 15692 / DSM 22644 / CIP 104116 / JCM 14847 / LMG 12228 / 1C / PRS 101 / PAO1) protein is S-adenosylmethionine decarboxylase proenzyme.